The chain runs to 346 residues: tRNA N6-adenosine threonylcarbamoyltransferase (346 aa).

The Fe cation site is built by H110 and H114. Substrate-binding positions include 132–136, D165, G178, and N274; that span reads LLSGG. D298 lines the Fe cation pocket.

The protein belongs to the KAE1 / TsaD family. Fe(2+) serves as cofactor.

It is found in the cytoplasm. The catalysed reaction is L-threonylcarbamoyladenylate + adenosine(37) in tRNA = N(6)-L-threonylcarbamoyladenosine(37) in tRNA + AMP + H(+). In terms of biological role, required for the formation of a threonylcarbamoyl group on adenosine at position 37 (t(6)A37) in tRNAs that read codons beginning with adenine. Is involved in the transfer of the threonylcarbamoyl moiety of threonylcarbamoyl-AMP (TC-AMP) to the N6 group of A37, together with TsaE and TsaB. TsaD likely plays a direct catalytic role in this reaction. The polypeptide is tRNA N6-adenosine threonylcarbamoyltransferase (Borreliella burgdorferi (strain ATCC 35210 / DSM 4680 / CIP 102532 / B31) (Borrelia burgdorferi)).